The chain runs to 122 residues: Fluoride-specific ion channel FluC (122 aa).

4 consecutive transmembrane segments (helical) span residues 1 to 21 (MYAF…RHYL), 35 to 55 (WAIL…SAYL), 67 to 87 (FLLT…LNLI), and 98 to 118 (FLNL…GFWL). The Na(+) site is built by G74 and T77.

Belongs to the fluoride channel Fluc/FEX (TC 1.A.43) family.

Its subcellular location is the cell inner membrane. It catalyses the reaction fluoride(in) = fluoride(out). Na(+) is not transported, but it plays an essential structural role and its presence is essential for fluoride channel function. Fluoride-specific ion channel. Important for reducing fluoride concentration in the cell, thus reducing its toxicity. The sequence is that of Fluoride-specific ion channel FluC from Dichelobacter nodosus (strain VCS1703A).